The following is a 467-amino-acid chain: DEAD-box ATP-dependent RNA helicase CshA (467 aa).

The Q motif signature appears at 2-30; it reads TTFQELGLSQEVMKAIERMGFEETTPIQA. A Helicase ATP-binding domain is found at 33-203; that stretch reads IPLSLQNKDV…ERFMNEPELV (171 aa). 46–53 contacts ATP; that stretch reads AQTGTGKT. A DEAD box motif is present at residues 151 to 154; the sequence is DEAD. Positions 214-374 constitute a Helicase C-terminal domain; that stretch reads NIQQYYLEVH…RMKPPTLDEA (161 aa). The segment at 428–467 is disordered; sequence TTPVQLTEEPPLAVKREKKRGGRPDGSARSRTKKRRITAH. Over residues 457–467 the composition is skewed to basic residues; that stretch reads SRTKKRRITAH.

This sequence belongs to the DEAD box helicase family. CshA subfamily. As to quaternary structure, oligomerizes, may be a member of the RNA degradosome.

The protein localises to the cytoplasm. It carries out the reaction ATP + H2O = ADP + phosphate + H(+). Its function is as follows. DEAD-box RNA helicase possibly involved in RNA degradation. Unwinds dsRNA in both 5'- and 3'-directions, has RNA-dependent ATPase activity. The protein is DEAD-box ATP-dependent RNA helicase CshA of Geobacillus kaustophilus (strain HTA426).